Here is a 169-residue protein sequence, read N- to C-terminus: Centrosomal protein 20 (169 aa).

A necessary and sufficient for homooligomerization and localization to centrosomes and pericentriolar satellites region spans residues 1 to 104; sequence MATVGDLKAV…VVEDLNSQSV (104 aa). Residues 49-81 form the LisH domain; it reads ENLLINELIREYLAFNKYSYTSSVLTAETGLSE. The tract at residues 135–169 is disordered; that stretch reads TFRNIPRGRNTKDTHSGPVQLTQTSTEDWHQRRHR. Over residues 151-160 the composition is skewed to polar residues; it reads GPVQLTQTST.

It belongs to the CEP43 family. In terms of assembly, homooligomer; probably required for localization to centrosomes.

The protein localises to the cell projection. Its subcellular location is the cilium. It localises to the cytoplasm. The protein resides in the cytoskeleton. It is found in the cilium basal body. The protein localises to the microtubule organizing center. Its subcellular location is the centrosome. It localises to the cytoplasmic granule. The protein resides in the centriolar satellite. In terms of biological role, involved in the biogenesis of cilia. Required for the recruitment of PLK1 to centrosomes and S phase progression. The chain is Centrosomal protein 20 (Cep20) from Xenopus laevis (African clawed frog).